A 299-amino-acid polypeptide reads, in one-letter code: Tyrosine recombinase XerC (299 aa).

Residues 1–86 (MRNELLDFLE…AIRSLFKFLT (86 aa)) form the Core-binding (CB) domain. Residues 107–293 (KLPEFLSIEE…NQARMTEVYN (187 aa)) enclose the Tyr recombinase domain. Catalysis depends on residues R146, K170, H245, R248, and H271. Residue Y280 is the O-(3'-phospho-DNA)-tyrosine intermediate of the active site.

Belongs to the 'phage' integrase family. XerC subfamily. As to quaternary structure, forms a cyclic heterotetrameric complex composed of two molecules of XerC and two molecules of XerD.

The protein localises to the cytoplasm. Its function is as follows. Site-specific tyrosine recombinase, which acts by catalyzing the cutting and rejoining of the recombining DNA molecules. The XerC-XerD complex is essential to convert dimers of the bacterial chromosome into monomers to permit their segregation at cell division. It also contributes to the segregational stability of plasmids. The sequence is that of Tyrosine recombinase XerC from Natranaerobius thermophilus (strain ATCC BAA-1301 / DSM 18059 / JW/NM-WN-LF).